The primary structure comprises 416 residues: UV excision repair protein RAD23 homolog B (416 aa).

The region spanning 1 to 79 (MQVTLKTLQQ…VVVMVTKPKA (79 aa)) is the Ubiquitin-like domain. Residues 83–111 (AVPATTQPSSTPSPTAVSSSPAVAAAQAP) are compositionally biased toward low complexity. A disordered region spans residues 83-175 (AVPATTQPSS…STPGDSSRSN (93 aa)). Residues 112–121 (APTPALPPTS) are compositionally biased toward pro residues. The segment covering 122-143 (TPASTAPASTTASSEPAPAGAT) has biased composition (low complexity). A Phosphothreonine modification is found at Thr-155. Residues Ser-160 and Ser-174 each carry the phosphoserine modification. Phosphothreonine is present on Thr-186. The UBA 1 domain maps to 188-228 (QSYENMVTEIMSMGYEREQVIAALRASFNNPDRAVEYLLMG). Ser-199 is modified (phosphoserine). The residue at position 202 (Tyr-202) is a Phosphotyrosine. The STI1 domain maps to 274-317 (HPLEFLRNQPQFQQMRQIIQQNPSLLPALLQQIGRENPQLLQQI). Residues 333 to 356 (QEAGSQGGGGGGGGGGGGGGGGGI) are disordered. Gly residues predominate over residues 337–356 (SQGGGGGGGGGGGGGGGGGI). Positions 371–411 (PQEKEAIERLKALGFPEGLVIQAYFACEKNENLAANFLLQQ) constitute a UBA 2 domain.

This sequence belongs to the RAD23 family. In terms of assembly, component of the XPC complex composed of XPC, RAD23B and CETN2. Interacts with NGLY1 and PSMC1. Interacts with ATXN3. Interacts with AMFR. Interacts with VCP; the interaction is indirect and mediated by NGLY1.

It localises to the nucleus. The protein resides in the cytoplasm. Its function is as follows. Multiubiquitin chain receptor involved in modulation of proteasomal degradation. Binds to polyubiquitin chains. Proposed to be capable to bind simultaneously to the 26S proteasome and to polyubiquitinated substrates and to deliver ubiquitinated proteins to the proteasome. May play a role in endoplasmic reticulum-associated degradation (ERAD) of misfolded glycoproteins by association with PNGase and delivering deglycosylated proteins to the proteasome. Functionally, involved in global genome nucleotide excision repair (GG-NER) by acting as component of the XPC complex. Cooperatively with Cetn2 appears to stabilize Xpc. May protect Xpc from proteasomal degradation. The XPC complex is proposed to represent the first factor bound at the sites of DNA damage and together with other core recognition factors, Xpa, RPA and the TFIIH complex, is part of the pre-incision (or initial recognition) complex. The XPC complex recognizes a wide spectrum of damaged DNA characterized by distortions of the DNA helix such as single-stranded loops, mismatched bubbles or single-stranded overhangs. The orientation of XPC complex binding appears to be crucial for inducing a productive NER. XPC complex is proposed to recognize and to interact with unpaired bases on the undamaged DNA strand which is followed by recruitment of the TFIIH complex and subsequent scanning for lesions in the opposite strand in a 5'-to-3' direction by the NER machinery. Cyclobutane pyrimidine dimers (CPDs) which are formed upon UV-induced DNA damage esacpe detection by the XPC complex due to a low degree of structural perurbation. Instead they are detected by the UV-DDB complex which in turn recruits and cooperates with the XPC complex in the respective DNA repair. In vitro, the Xpc:Rad23b dimer is sufficient to initiate NER; it preferentially binds to cisplatin and UV-damaged double-stranded DNA and also binds to a variety of chemically and structurally diverse DNA adducts. Xpc:Rad23b contacts DNA both 5' and 3' of a cisplatin lesion with a preference for the 5' side. Xpc:Rad23bB induces a bend in DNA upon binding. Xpc:Rad23b stimulates the activity of DNA glycosylases Tdg and Smug1. In Mus musculus (Mouse), this protein is UV excision repair protein RAD23 homolog B (Rad23b).